Consider the following 240-residue polypeptide: tRNA (guanine-N(1)-)-methyltransferase (240 aa).

S-adenosyl-L-methionine-binding positions include Gly-110 and 129–134 (LGDFVL).

The protein belongs to the RNA methyltransferase TrmD family. In terms of assembly, homodimer.

Its subcellular location is the cytoplasm. The catalysed reaction is guanosine(37) in tRNA + S-adenosyl-L-methionine = N(1)-methylguanosine(37) in tRNA + S-adenosyl-L-homocysteine + H(+). Functionally, specifically methylates guanosine-37 in various tRNAs. This Clostridium botulinum (strain 657 / Type Ba4) protein is tRNA (guanine-N(1)-)-methyltransferase.